The following is a 385-amino-acid chain: tRNA-specific 2-thiouridylase MnmA (385 aa).

ATP contacts are provided by residues 27 to 34 and leucine 53; that span reads AMSGGVDS. Cysteine 121 functions as the Nucleophile in the catalytic mechanism. Cysteine 121 and cysteine 217 are disulfide-bonded. Glycine 145 serves as a coordination point for ATP. Residues 167–169 form an interaction with tRNA region; that stretch reads KDQ. Cysteine 217 functions as the Cysteine persulfide intermediate in the catalytic mechanism.

This sequence belongs to the MnmA/TRMU family.

The protein localises to the cytoplasm. It catalyses the reaction S-sulfanyl-L-cysteinyl-[protein] + uridine(34) in tRNA + AH2 + ATP = 2-thiouridine(34) in tRNA + L-cysteinyl-[protein] + A + AMP + diphosphate + H(+). Catalyzes the 2-thiolation of uridine at the wobble position (U34) of tRNA, leading to the formation of s(2)U34. The protein is tRNA-specific 2-thiouridylase MnmA of Sorangium cellulosum (strain So ce56) (Polyangium cellulosum (strain So ce56)).